Reading from the N-terminus, the 129-residue chain is Glycine cleavage system H protein (129 aa).

Residues 24–106 (TYTVGITEHA…YVGGWIFKIK (83 aa)) enclose the Lipoyl-binding domain. The residue at position 65 (Lys-65) is an N6-lipoyllysine.

The protein belongs to the GcvH family. The glycine cleavage system is composed of four proteins: P, T, L and H. (R)-lipoate is required as a cofactor.

The glycine cleavage system catalyzes the degradation of glycine. The H protein shuttles the methylamine group of glycine from the P protein to the T protein. This chain is Glycine cleavage system H protein, found in Salmonella paratyphi B (strain ATCC BAA-1250 / SPB7).